The following is a 167-amino-acid chain: Peptidyl-prolyl cis-trans isomerase-like 3 (167 aa).

Positions M1 to I160 constitute a PPIase cyclophilin-type domain.

It belongs to the cyclophilin-type PPIase family. PPIL3 subfamily.

The enzyme catalyses [protein]-peptidylproline (omega=180) = [protein]-peptidylproline (omega=0). In terms of biological role, PPIases accelerate the folding of proteins. It catalyzes the cis-trans isomerization of proline imidic peptide bonds in oligopeptides. The chain is Peptidyl-prolyl cis-trans isomerase-like 3 (CYP10) from Gibberella zeae (strain ATCC MYA-4620 / CBS 123657 / FGSC 9075 / NRRL 31084 / PH-1) (Wheat head blight fungus).